Here is a 223-residue protein sequence, read N- to C-terminus: Phosphoribosylformylglycinamidine synthase subunit PurQ (223 aa).

Positions 3–223 (SAVVQLPGLN…FASALDVVAA (221 aa)) constitute a Glutamine amidotransferase type-1 domain. Catalysis depends on C86, which acts as the Nucleophile. Residues H196 and E198 contribute to the active site.

Part of the FGAM synthase complex composed of 1 PurL, 1 PurQ and 2 PurS subunits.

It is found in the cytoplasm. The enzyme catalyses N(2)-formyl-N(1)-(5-phospho-beta-D-ribosyl)glycinamide + L-glutamine + ATP + H2O = 2-formamido-N(1)-(5-O-phospho-beta-D-ribosyl)acetamidine + L-glutamate + ADP + phosphate + H(+). It catalyses the reaction L-glutamine + H2O = L-glutamate + NH4(+). The protein operates within purine metabolism; IMP biosynthesis via de novo pathway; 5-amino-1-(5-phospho-D-ribosyl)imidazole from N(2)-formyl-N(1)-(5-phospho-D-ribosyl)glycinamide: step 1/2. Functionally, part of the phosphoribosylformylglycinamidine synthase complex involved in the purines biosynthetic pathway. Catalyzes the ATP-dependent conversion of formylglycinamide ribonucleotide (FGAR) and glutamine to yield formylglycinamidine ribonucleotide (FGAM) and glutamate. The FGAM synthase complex is composed of three subunits. PurQ produces an ammonia molecule by converting glutamine to glutamate. PurL transfers the ammonia molecule to FGAR to form FGAM in an ATP-dependent manner. PurS interacts with PurQ and PurL and is thought to assist in the transfer of the ammonia molecule from PurQ to PurL. The chain is Phosphoribosylformylglycinamidine synthase subunit PurQ from Rhizobium etli (strain ATCC 51251 / DSM 11541 / JCM 21823 / NBRC 15573 / CFN 42).